We begin with the raw amino-acid sequence, 237 residues long: Lipoprotein-releasing system ATP-binding protein LolD (237 aa).

The 222-residue stretch at 16 to 237 folds into the ABC transporter domain; that stretch reads LKCEGLTRIY…LDQGRLSEDA (222 aa). 52-59 lines the ATP pocket; the sequence is GSSGSGKT.

The protein belongs to the ABC transporter superfamily. Lipoprotein translocase (TC 3.A.1.125) family. As to quaternary structure, the complex is composed of two ATP-binding proteins (LolD) and two transmembrane proteins (LolC and LolE).

The protein localises to the cell inner membrane. Functionally, part of the ABC transporter complex LolCDE involved in the translocation of mature outer membrane-directed lipoproteins, from the inner membrane to the periplasmic chaperone, LolA. Responsible for the formation of the LolA-lipoprotein complex in an ATP-dependent manner. The polypeptide is Lipoprotein-releasing system ATP-binding protein LolD (Chromohalobacter salexigens (strain ATCC BAA-138 / DSM 3043 / CIP 106854 / NCIMB 13768 / 1H11)).